Reading from the N-terminus, the 116-residue chain is Iron-sulfur cluster insertion protein ErpA (116 aa).

3 residues coordinate iron-sulfur cluster: C44, C108, and C110.

This sequence belongs to the HesB/IscA family. Homodimer. The cofactor is iron-sulfur cluster.

Its function is as follows. Required for insertion of 4Fe-4S clusters for at least IspG. This Ectopseudomonas mendocina (strain ymp) (Pseudomonas mendocina) protein is Iron-sulfur cluster insertion protein ErpA.